The sequence spans 381 residues: MAINIRKTHPLLKIMNHALVDLPAPSNISLWWNFGSHLGLCLIIQILTGLFLAMHYTADISMAFSSVVHICRDVNYGWLIRNIHANGASLFFICVYLHIARGLYYGSYLYKETWNIGVILLFLLMATAFVGYVLPWGQMSFWGATVITNLLSAFPYIGDMLVQWIWGGFSVDNATLTRFFAFHFLLPFLILALTVIHLLFLHETGSNNPLGINSDADKISFHPYFSYKDLLGFFVMIFFLAALALFMPNLLGDAENFIPANPLVTPPHIKPEWYFLFAYAILRSIPNKLGGVLALLFSIFILMLVPLLHTSKQRSTIFRPMTQILFWFLVANSIILTWIGGQPVEQPFIMVGQIASISYFSLFLIIMPFTSWWENKILSLN.

The next 4 membrane-spanning stretches (helical) occupy residues Phe-34–Met-54, Trp-78–Ile-99, Trp-114–Leu-134, and Phe-179–Leu-199. His-84 and His-98 together coordinate heme b. 2 residues coordinate heme b: His-183 and His-197. Residue His-202 coordinates a ubiquinone. 4 helical membrane-spanning segments follow: residues Tyr-227–Met-247, Leu-289–His-309, Met-321–Gly-341, and Phe-348–Pro-368.

This sequence belongs to the cytochrome b family. The cytochrome bc1 complex contains 3 respiratory subunits (MT-CYB, CYC1 and UQCRFS1), 2 core proteins (UQCRC1 and UQCRC2) and probably 6 low-molecular weight proteins. Heme b serves as cofactor.

It localises to the mitochondrion inner membrane. Component of the ubiquinol-cytochrome c reductase complex (complex III or cytochrome b-c1 complex) that is part of the mitochondrial respiratory chain. The b-c1 complex mediates electron transfer from ubiquinol to cytochrome c. Contributes to the generation of a proton gradient across the mitochondrial membrane that is then used for ATP synthesis. The chain is Cytochrome b (mt-cyb) from Carcharhinus porosus (Smalltail shark).